Here is a 153-residue protein sequence, read N- to C-terminus: HTH-type transcriptional regulator Zrp (153 aa).

One can recognise an HTH asnC-type domain in the interval 2-63 (IDYRDRHILS…LLDRKKINLP (62 aa)). The H-T-H motif DNA-binding region spans 21–40 (LAEIAERVALSVSACSRRVA).

This is HTH-type transcriptional regulator Zrp (zrp) from Zymomonas mobilis subsp. mobilis (strain ATCC 10988 / DSM 424 / LMG 404 / NCIMB 8938 / NRRL B-806 / ZM1).